The chain runs to 324 residues: Galactosylgalactosylxylosylprotein 3-beta-glucuronosyltransferase 2 (324 aa).

The Cytoplasmic segment spans residues 1–2 (MK). The chain crosses the membrane as a helical; Signal-anchor for type II membrane protein span at residues 3 to 23 (SALCSRFFILLPWILIVIIML). Topologically, residues 24–324 (DVDPRRPAPQ…YHLDTVNIEV (301 aa)) are lumenal. Residues 50–78 (SRVPLRRSSPGRDAAEKRNESRPQLQPEP) form a disordered region. N-linked (GlcNAc...) asparagine glycosylation occurs at N68. UDP-alpha-D-glucuronate-binding positions include 88-90 (PTY), D119, R156, R161, and 186-188 (DDD). D188 is a Mn(2+) binding site. The tract at residues 235 to 244 (WREDRPFAID) is interaction with galactose moiety of substrate glycoprotein. The active-site Proton donor/acceptor is the E274. A glycan (N-linked (GlcNAc...) asparagine) is linked at N293. 301-303 (HTR) is a UDP-alpha-D-glucuronate binding site.

Belongs to the glycosyltransferase 43 family. As to quaternary structure, homodimer. Mn(2+) is required as a cofactor. In terms of tissue distribution, expressed in brain, but not in liver and kidney.

Its subcellular location is the golgi apparatus membrane. The catalysed reaction is 3-O-(beta-D-galactosyl-(1-&gt;3)-beta-D-galactosyl-(1-&gt;4)-beta-D-xylosyl)-L-seryl-[protein] + UDP-alpha-D-glucuronate = 3-O-(beta-D-GlcA-(1-&gt;3)-beta-D-Gal-(1-&gt;3)-beta-D-Gal-(1-&gt;4)-beta-D-Xyl)-L-seryl-[protein] + UDP + H(+). It functions in the pathway protein modification; protein glycosylation. Involved in the biosynthesis of L2/HNK-1 carbohydrate epitope on both glycolipids and glycoproteins. This is Galactosylgalactosylxylosylprotein 3-beta-glucuronosyltransferase 2 (B3gat2) from Mus musculus (Mouse).